A 1249-amino-acid polypeptide reads, in one-letter code: Minor capsid protein M1249L (1249 aa).

This sequence belongs to the asfivirus M1249L family. As to quaternary structure, interacts with the minor capsid protein p17 and with the hexon capsid protein p72 capsomers; these interactions form a rigid zipper structure that stabilizes the capsomers. Interacts with host IRF3.

It is found in the virion. Its subcellular location is the host cytoplasm. Together with the penton and the other minor capsid proteins (p17, p49), forms a complicated network immediately below the outer capsid shell, stabilizing the whole capsid. In addition, blocks IFN-beta transactivation mediated by the cGAS-STING pathway and regulates the transcriptional activity of IFN-beta. Mechanistically, suppresses the phosphorylation of host key adapter protein TBK1 and degrades host IRF3 in the cytoplasm. The sequence is that of Minor capsid protein M1249L from African swine fever virus (isolate Tick/Malawi/Lil 20-1/1983) (ASFV).